A 155-amino-acid chain; its full sequence is MSKITEQVEVIVKPIMEDLNFELVDVEYVKEGRDHFLRISIDKEGGVDLNDCTLASEKISEAMDANDPIPEMYYLDVASPGAERPIKKEQDFQNAITKPVFVSLYVPIEGEKEWLGILQEVNNETIVVQVKIKARTKDIEIPRDKIAKARHAVMI.

Belongs to the RimP family.

Its subcellular location is the cytoplasm. Required for maturation of 30S ribosomal subunits. The polypeptide is Ribosome maturation factor RimP (Staphylococcus aureus (strain bovine RF122 / ET3-1)).